Reading from the N-terminus, the 410-residue chain is Na(+)-translocating NADH-quinone reductase subunit B (410 aa).

3 consecutive transmembrane segments (helical) span residues 56–76 (MMIL…YNVG), 119–139 (LFGA…GGFW), and 159–179 (SILF…ALGI). T232 is subject to FMN phosphoryl threonine. 5 helical membrane-spanning segments follow: residues 266 to 286 (GSIG…IVFA), 293 to 313 (IIAG…FIGS), 318 to 338 (MFAM…GMLF), 347 to 367 (SFTN…CVLI), and 377 to 397 (GMML…YFVA).

The protein belongs to the NqrB/RnfD family. In terms of assembly, composed of six subunits; NqrA, NqrB, NqrC, NqrD, NqrE and NqrF. FMN serves as cofactor.

The protein resides in the cell inner membrane. The enzyme catalyses a ubiquinone + n Na(+)(in) + NADH + H(+) = a ubiquinol + n Na(+)(out) + NAD(+). In terms of biological role, NQR complex catalyzes the reduction of ubiquinone-1 to ubiquinol by two successive reactions, coupled with the transport of Na(+) ions from the cytoplasm to the periplasm. NqrA to NqrE are probably involved in the second step, the conversion of ubisemiquinone to ubiquinol. This is Na(+)-translocating NADH-quinone reductase subunit B from Neisseria meningitidis serogroup A / serotype 4A (strain DSM 15465 / Z2491).